The primary structure comprises 980 residues: MAAYNAPVSNCQFRLTHILPIPQRHGAPTDPFQMNAIRQQSDSAEPLRHDIRLLGRCLGEVIQACEGKRVYDTIETLRRTAVRFRRAGDPADDKLLQARVKQLRGNDPNSVARAFSYFLHLSNIAEDRDQNRRQRERALAGAGPERGSLRQAIESLKAQGVNNARIRRLLSEACVMPVLTAHPTEVQRKSTLDVHREISSLLVQRERELTADELSELDLALIGQVATLWQTRMLRYTRLTVADEIENALSYYRSTFLNVIPRVYGDLARLLNREPVKPFTPPPPPLEPFLRMGSWIGGDRDGNPNVDAATLERALLRQATVLFEHYLQEVHALGAELSASTLLIEADPALLALADAGGDDSPHRRDEPYRRALIGIYARLAATARHLTGQKLARRATVPAAPYDTPDALAADLAVIAASLSARHGAPIARLRLSGLQQAVTVFGFHLATVDLRQSSDVHERVLAELFARAGDGIDGQAVDYLALDEAARVAGRELAHARPLASPWIAYSEETASELAVLRAAAAGRARYGRQAVLQSIVSHTETLSDLLEVLVLQKEAGLIAPPGETIAPGDGLMVVPLFETIPDLQRGPEIMAAWLDLPEVRQRVRLAQGDTQEVMLGYSDSNKDGGFLTSNWSLYQAERALVDVFSARSVRLRMFHGRGDSVGRGGGSSYDAILAQPPGTVAGQLRLTEQGEVIQSKYKDAEVGRWHLELLVAATLESSLAPQAAATSAEDAHMQQHAPAMSFMSELAQRTYRGLVYDTPGFADYFFAATPISEIAGLNIGSRPASRKKGQHIEDLRAIPWGFSWAQCRLMLTGWYGMGSAIEAYLETGAQGAPRSRRARLAQLREMASDWPAFRTLLSNMEMVLAKSDLAIAAGYAQLVPRRGLRERVFGAITAEHGRTLAMLRLLTRRDLLADNPGLMASLRERFAYIDPLNYLQIELIKRHRAAQRRAGDDADIRVPRAIHLTINGIAAGLRNSG.

Residues His-182 and Lys-625 contribute to the active site.

The protein belongs to the PEPCase type 1 family. It depends on Mg(2+) as a cofactor.

It catalyses the reaction oxaloacetate + phosphate = phosphoenolpyruvate + hydrogencarbonate. Forms oxaloacetate, a four-carbon dicarboxylic acid source for the tricarboxylic acid cycle. This chain is Phosphoenolpyruvate carboxylase, found in Bordetella pertussis (strain Tohama I / ATCC BAA-589 / NCTC 13251).